We begin with the raw amino-acid sequence, 431 residues long: Adenylosuccinate lyase (431 aa).

N(6)-(1,2-dicarboxyethyl)-AMP is bound by residues 4-5, 67-69, and 93-94; these read RY, RHD, and TS. Catalysis depends on His-141, which acts as the Proton donor/acceptor. Gln-212 is a binding site for N(6)-(1,2-dicarboxyethyl)-AMP. Ser-262 (proton donor/acceptor) is an active-site residue. Residues Ser-263, 268-270, Asn-276, and 307-311 each bind N(6)-(1,2-dicarboxyethyl)-AMP; these read KRN and SAERI.

This sequence belongs to the lyase 1 family. Adenylosuccinate lyase subfamily. As to quaternary structure, homodimer and homotetramer. Residues from neighboring subunits contribute catalytic and substrate-binding residues to each active site.

It carries out the reaction N(6)-(1,2-dicarboxyethyl)-AMP = fumarate + AMP. The enzyme catalyses (2S)-2-[5-amino-1-(5-phospho-beta-D-ribosyl)imidazole-4-carboxamido]succinate = 5-amino-1-(5-phospho-beta-D-ribosyl)imidazole-4-carboxamide + fumarate. Its pathway is purine metabolism; AMP biosynthesis via de novo pathway; AMP from IMP: step 2/2. The protein operates within purine metabolism; IMP biosynthesis via de novo pathway; 5-amino-1-(5-phospho-D-ribosyl)imidazole-4-carboxamide from 5-amino-1-(5-phospho-D-ribosyl)imidazole-4-carboxylate: step 2/2. In terms of biological role, catalyzes two reactions in de novo purine nucleotide biosynthesis. Catalyzes the breakdown of 5-aminoimidazole- (N-succinylocarboxamide) ribotide (SAICAR or 2-[5-amino-1-(5-phospho-beta-D-ribosyl)imidazole-4-carboxamido]succinate) to 5-aminoimidazole-4-carboxamide ribotide (AICAR or 5-amino-1-(5-phospho-beta-D-ribosyl)imidazole-4-carboxamide) and fumarate, and of adenylosuccinate (ADS or N(6)-(1,2-dicarboxyethyl)-AMP) to adenosine monophosphate (AMP) and fumarate. This Staphylococcus aureus (strain USA300) protein is Adenylosuccinate lyase (purB).